The following is a 223-amino-acid chain: Protein UGX2 (223 aa).

Residues 78–95 (SNKRAKMKSKTKLTRTAK) show a composition bias toward basic residues. Residues 78 to 117 (SNKRAKMKSKTKLTRTAKQRRESPVCERDESDEDNDSDHY) are disordered. Residues 96–105 (QRRESPVCER) are compositionally biased toward basic and acidic residues.

This chain is Protein UGX2 (UGX2), found in Saccharomyces cerevisiae (strain ATCC 204508 / S288c) (Baker's yeast).